We begin with the raw amino-acid sequence, 194 residues long: MLNVTITDSAQTYLRELLEKQACEGIGIRMFVSNPGTPQAETCIAYCRPGEAEEADHVMELSGFNAYFEDRSVPFLDEAKVDYAPDKMGGQLTIRAPNSKMPKISDDSPIEDKINYVLYNEVNPGLASHGGNVSLERLTDDGMAILRFGGGCQGCSAVDMTLKQGVEKTLMERIPELAGVRDVTDHSDKSNAYY.

Positions 152 and 155 each coordinate [4Fe-4S] cluster.

Belongs to the NfuA family. As to quaternary structure, homodimer. [4Fe-4S] cluster is required as a cofactor.

Functionally, involved in iron-sulfur cluster biogenesis. Binds a 4Fe-4S cluster, can transfer this cluster to apoproteins, and thereby intervenes in the maturation of Fe/S proteins. Could also act as a scaffold/chaperone for damaged Fe/S proteins. The polypeptide is Fe/S biogenesis protein NfuA (Teredinibacter turnerae (strain ATCC 39867 / T7901)).